A 366-amino-acid chain; its full sequence is Fructose-bisphosphate aldolase 2 (366 aa).

The substrate site is built by arginine 60 and lysine 150. The active-site Proton acceptor is the glutamate 191. Catalysis depends on lysine 233, which acts as the Schiff-base intermediate with dihydroxyacetone-P.

Belongs to the class I fructose-bisphosphate aldolase family.

It carries out the reaction beta-D-fructose 1,6-bisphosphate = D-glyceraldehyde 3-phosphate + dihydroxyacetone phosphate. The protein operates within carbohydrate degradation; glycolysis; D-glyceraldehyde 3-phosphate and glycerone phosphate from D-glucose: step 4/4. In Caenorhabditis elegans, this protein is Fructose-bisphosphate aldolase 2 (aldo-2).